Consider the following 300-residue polypeptide: MNRLLVIAGPTASGKTALAVALARRLGGEIVNADSQQVYRGLDVGTAKPTAAERAAVPHHLLDVAEAGEGMDAARFAALADAAIADVAARGRLPIVAGGTGLYLRALLHGVVAAPGRDAALRARLEEEAARLGRPALHARLAALDPDAAARIRPNDLVRIVRALEIAAGGTRPSELYARHAFREDRYAARLLALDPPRASLHARIDARVAEMFAGGLLEEARALAARFGDALPPKLPIGYAEAIGCVRGELQLAEAVRRVQVAHRRYARRQVIWLRRERGVEWIAPPFDADDLARRVENG.

9–16 (GPTASGKT) lines the ATP pocket. 11-16 (TASGKT) is a substrate binding site. The segment at 34–37 (DSQQ) is interaction with substrate tRNA.

This sequence belongs to the IPP transferase family. As to quaternary structure, monomer. Mg(2+) is required as a cofactor.

The catalysed reaction is adenosine(37) in tRNA + dimethylallyl diphosphate = N(6)-dimethylallyladenosine(37) in tRNA + diphosphate. Functionally, catalyzes the transfer of a dimethylallyl group onto the adenine at position 37 in tRNAs that read codons beginning with uridine, leading to the formation of N6-(dimethylallyl)adenosine (i(6)A). The polypeptide is tRNA dimethylallyltransferase (Anaeromyxobacter sp. (strain Fw109-5)).